A 375-amino-acid polypeptide reads, in one-letter code: Tyrosine--tRNA ligase (375 aa).

The L-tyrosine site is built by Y37, Y168, Q172, D175, and Q190. The short motif at 251-255 (KMSKS) is the 'KMSKS' region element. Residue K254 participates in ATP binding.

The protein belongs to the class-I aminoacyl-tRNA synthetase family. TyrS type 4 subfamily. In terms of assembly, homodimer.

Its subcellular location is the cytoplasm. It carries out the reaction tRNA(Tyr) + L-tyrosine + ATP = L-tyrosyl-tRNA(Tyr) + AMP + diphosphate + H(+). Its function is as follows. Catalyzes the attachment of tyrosine to tRNA(Tyr) in a two-step reaction: tyrosine is first activated by ATP to form Tyr-AMP and then transferred to the acceptor end of tRNA(Tyr). This Thermococcus sibiricus (strain DSM 12597 / MM 739) protein is Tyrosine--tRNA ligase.